Here is a 387-residue protein sequence, read N- to C-terminus: Penicillopepsin-1 (387 aa).

The N-terminal stretch at 1 to 19 is a signal peptide; it reads MVNSKTVVSALALSALAAA. Residues 20-66 constitute a propeptide, activation peptide; sequence APAPSSTTSFSINQVAVKKPAIHPAVKYAKALAKYHAEIPSNVASAA. Residues 85-384 enclose the Peptidase A1 domain; sequence YVTPITAGSS…DGDNLQLGFA (300 aa). Catalysis depends on residues Asp-101 and Asp-279. Residue Asn-304 is glycosylated (N-linked (GlcNAc...) asparagine). Cys-315 and Cys-347 are disulfide-bonded.

The protein belongs to the peptidase A1 family. As to quaternary structure, monomer.

It localises to the secreted. The enzyme catalyses Hydrolysis of proteins with broad specificity similar to that of pepsin A, preferring hydrophobic residues at P1 and P1', but also cleaving 20-Gly-|-Glu-21 in the B chain of insulin. Clots milk, and activates trypsinogen.. Secreted aspartic endopeptidase that allows assimilation of proteinaceous substrates. The scissile peptide bond is attacked by a nucleophilic water molecule activated by two aspartic residues in the active site. Shows a broad primary substrate specificity. Favors hydrophobic residues at the P1 and P1' positions, but can also activate trypsinogen and hydrolyze the B chain of insulin between positions 'Gly-20' and 'Glu-21'. This chain is Penicillopepsin-1 (pepA), found in Talaromyces stipitatus (strain ATCC 10500 / CBS 375.48 / QM 6759 / NRRL 1006) (Penicillium stipitatum).